The sequence spans 589 residues: Chromodomain Y-like protein (589 aa).

Over residues methionine 1–threonine 10 the composition is skewed to polar residues. The disordered stretch occupies residues methionine 1–valine 57. The segment covering lysine 11–arginine 30 has biased composition (basic and acidic residues). The Chromo domain maps to threonine 55 to threonine 115. Positions threonine 55 to threonine 300 are interaction with EZH2. The residue at position 82 (serine 82) is a Phosphoserine. The tract at residues arginine 110–serine 155 is disordered. The span at alanine 117–arginine 128 shows a compositional bias: low complexity. Lysine 129 is subject to N6,N6,N6-trimethyllysine; by EHMT2; alternate. Lysine 129 carries the N6,N6-dimethyllysine; by EHMT2; alternate modification. Lysine 129 carries the N6-methyllysine; by EHMT2; alternate modification. Residues serine 132–asparagine 143 are compositionally biased toward polar residues. Phosphoserine occurs at positions 164, 195, and 210. Positions serine 202–proline 224 are disordered. The span at phenylalanine 206–glutamine 216 shows a compositional bias: basic and acidic residues. The tract at residues serine 353–lysine 585 is acetyl-CoA-binding domain.

In terms of assembly, forms multimers and multimerization is required for stable binding to chromatin. Interacts with HDAC1 and HDAC2 via its C-terminal acetyl-CoA-binding domain. Interacts with EZH2, EED, SUZ12, REST, EHMT1 and EHMT2. Part of a complex containing at least CDYL, REST, WIZ, SETB1, EHMT1 and EHMT2. Part of a complex containing at least CDYL, MIER1, MIER2, HDAC1 and HDAC2. Interacts with CHAF1A and CHAF1B; bridging the CAF-1 complex to the MCM2-7 (MCM) complex. Interacts with MCM3 and MCM5; bridging the CAF-1 complex to the MCM2-7 (MCM) complex. Recruited to Xist RNA-coated X chromosome. Interacts with EHMT2 and PRDM9; interaction only takes place when PRDM9 is bound to hotspot DNA. Expressed in the brain, with expression in the hippocampal dentate gyrus, CA1, striatum and cortex (at protein level). Expressed in the prelimbic cortex.

It is found in the nucleus. The protein localises to the chromosome. The enzyme catalyses 3-hydroxybutanoyl-CoA = (2E)-butenoyl-CoA + H2O. Chromatin reader protein that recognizes and binds histone H3 trimethylated at 'Lys-9', dimethylated at 'Lys-27' and trimethylated at 'Lys-27' (H3K9me3, H3K27me2 and H3K27me3, respectively). Part of multimeric repressive chromatin complexes, where it is required for transmission and restoration of repressive histone marks, thereby preserving the epigenetic landscape. Required for chromatin targeting and maximal enzymatic activity of Polycomb repressive complex 2 (PRC2); acts as a positive regulator of PRC2 activity by bridging the pre-existing histone H3K27me3 and newly recruited PRC2 on neighboring nucleosomes. Acts as a corepressor for REST by facilitating histone-lysine N-methyltransferase EHMT2 recruitment and H3K9 dimethylation at REST target genes for repression. Involved in X chromosome inactivation in females: recruited to Xist RNA-coated X chromosome and facilitates propagation of H3K9me2 by anchoring EHMT2. Promotes EZH2 accumulation and H3K27me3 methylation at DNA double strand breaks (DSBs), thereby facilitating transcriptional repression at sites of DNA damage and homology-directed repair of DSBs. Required for neuronal migration during brain development by repressing expression of RHOA. By repressing the expression of SCN8A, contributes to the inhibition of intrinsic neuronal excitability and epileptogenesis. In addition to acting as a chromatin reader, acts as a hydro-lyase. Shows crotonyl-coA hydratase activity by mediating the conversion of crotonyl-CoA ((2E)-butenoyl-CoA) to beta-hydroxybutyryl-CoA (3-hydroxybutanoyl-CoA), thereby acting as a negative regulator of histone crotonylation. Histone crotonylation is required during spermatogenesis; down-regulation of histone crotonylation by CDYL regulates the reactivation of sex chromosome-linked genes in round spermatids and histone replacement in elongating spermatids. By regulating histone crotonylation and trimethylation of H3K27, may be involved in stress-induced depression-like behaviors, possibly by regulating VGF expression. Displays acetyltransferase activity toward tubulin in vitro; such activity is however unsure in vivo and additional evidences would be required to confirm this result. Functionally, not able to recognize and bind histone H3K9me3, histone H3K27me2 and histone H3K27me3, due to the presence of a N-terminal extension that inactivates the chromo domain. The sequence is that of Chromodomain Y-like protein from Rattus norvegicus (Rat).